Here is a 515-residue protein sequence, read N- to C-terminus: MLRYRQVVGLLQRRNFSAGATSNGSGSSGGDKSGEDLHPIRRTLRLLGNDMRKVKEFFVPKEPETEKVPIPTQSQFHFSGERDKSKEATVPDDFQTHCDVLIIGGGGVGSSIAYWLKEKARDGLNVVVVEKDDTYAQSATRVSVGGLCQQFSLPENIQMSLFAADFLRSARKHFGEEVPLQFTPHGHLMLAGEEHAESLKRSSQLQNELGARNELLTADRLTARFPWLNTKGIALGCLGLEKEGWFNPLALLSNFRRSASGYGAHFISGQVVDFEFKSQTDISVVTDLGSNEGAYTGLEKAVIQLPDGTRRTCKFALCVISAGASSEQIARLARIGVGPGILRVPLPINARKRYMYAINSQAQSAPGMNMPMTIDPSGIFIRRDGLGGNYICVQDSTEEYNSAMIDPQYFAQHIRPHLYNRIPVLGEAQVVDSWAGCYDHNVYDENGILGAHPYYNNLYLATGFSGHGVQQSLAVGRAISELIMDGQFRTIDLSRLSFDRLIVDQPMFELNNVLS.

The interval 18 to 37 is disordered; sequence AGATSNGSGSSGGDKSGEDL. A helical membrane pass occupies residues 100–116; it reads VLIIGGGGVGSSIAYWL.

Associates with mitochondrial complex I assembly intermediates during its biogenesis. It depends on FAD as a cofactor.

Its subcellular location is the mitochondrion inner membrane. In terms of biological role, involved in the assembly of the mitochondrial membrane respiratory chain NADH dehydrogenase (Complex I). This is FAD-dependent oxidoreductase domain-containing protein 1 homolog from Drosophila melanogaster (Fruit fly).